We begin with the raw amino-acid sequence, 150 residues long: Cytochrome c-type biogenesis protein CcmE (150 aa).

Residues 1–7 (MTRKQKR) are Cytoplasmic-facing. A helical; Signal-anchor for type II membrane protein membrane pass occupies residues 8–28 (LAIIGGGVAFLTAAVLLVMFA). At 29 to 150 (FSQAVAYFYV…VTLGGEENIR (122 aa)) the chain is on the periplasmic side. Histidine 123 and tyrosine 127 together coordinate heme.

It belongs to the CcmE/CycJ family.

It localises to the cell inner membrane. Its function is as follows. Heme chaperone required for the biogenesis of c-type cytochromes. Transiently binds heme delivered by CcmC and transfers the heme to apo-cytochromes in a process facilitated by CcmF and CcmH. In Rhizobium meliloti (strain 1021) (Ensifer meliloti), this protein is Cytochrome c-type biogenesis protein CcmE.